The chain runs to 397 residues: Tubby-like protein 8 (397 aa).

Residues 1–16 are compositionally biased toward basic and acidic residues; the sequence is MAGSRKVNDLLEENKG. A disordered region spans residues 1 to 46; that stretch reads MAGSRKVNDLLEENKGNVDTITGSLSTQKGEDKENVSPEKVSTSVE. Residues 17 to 28 are compositionally biased toward polar residues; the sequence is NVDTITGSLSTQ.

The protein belongs to the TUB family. As to expression, mostly expressed in roots, flowers and siliques.

The sequence is that of Tubby-like protein 8 from Arabidopsis thaliana (Mouse-ear cress).